The sequence spans 673 residues: tRNA 5-methylaminomethyl-2-thiouridine biosynthesis bifunctional protein MnmC (673 aa).

Residues 1 to 245 (MSHAPIQTAA…KREMLIGELP (245 aa)) are tRNA (mnm(5)s(2)U34)-methyltransferase. The tract at residues 272–673 (IGGGVASALT…VRKLLKGRAV (402 aa)) is FAD-dependent cmnm(5)s(2)U34 oxidoreductase.

In the N-terminal section; belongs to the methyltransferase superfamily. tRNA (mnm(5)s(2)U34)-methyltransferase family. This sequence in the C-terminal section; belongs to the DAO family. It depends on FAD as a cofactor.

It localises to the cytoplasm. The enzyme catalyses 5-aminomethyl-2-thiouridine(34) in tRNA + S-adenosyl-L-methionine = 5-methylaminomethyl-2-thiouridine(34) in tRNA + S-adenosyl-L-homocysteine + H(+). In terms of biological role, catalyzes the last two steps in the biosynthesis of 5-methylaminomethyl-2-thiouridine (mnm(5)s(2)U) at the wobble position (U34) in tRNA. Catalyzes the FAD-dependent demodification of cmnm(5)s(2)U34 to nm(5)s(2)U34, followed by the transfer of a methyl group from S-adenosyl-L-methionine to nm(5)s(2)U34, to form mnm(5)s(2)U34. The polypeptide is tRNA 5-methylaminomethyl-2-thiouridine biosynthesis bifunctional protein MnmC (Serratia proteamaculans (strain 568)).